The sequence spans 445 residues: GTPase Der (445 aa).

EngA-type G domains follow at residues Pro-3–Gln-167 and Ile-180–Met-353. Residues Gly-9–Ser-16, Asp-56–Phe-60, Asn-119–Glu-122, Gly-186–Ser-193, Asp-233–Leu-237, and Asn-298–Asp-301 each bind GTP. The KH-like domain maps to Ser-354–Asn-438.

Belongs to the TRAFAC class TrmE-Era-EngA-EngB-Septin-like GTPase superfamily. EngA (Der) GTPase family. As to quaternary structure, associates with the 50S ribosomal subunit.

GTPase that plays an essential role in the late steps of ribosome biogenesis. This is GTPase Der from Burkholderia cenocepacia (strain ATCC BAA-245 / DSM 16553 / LMG 16656 / NCTC 13227 / J2315 / CF5610) (Burkholderia cepacia (strain J2315)).